A 429-amino-acid chain; its full sequence is uncharacterized protein (429 aa).

Positions 1–12 (MSDSKEDIRNGQ) are enriched in basic and acidic residues. Disordered stretches follow at residues 1–63 (MSDS…APEA), 257–306 (RSRA…SDRM), and 320–429 (YRGY…SDSE). Over residues 328-362 (EENEEDDLGDFIAEEEEEEEQEEEQEEDEEDEEEV) the composition is skewed to acidic residues. Basic and acidic residues predominate over residues 369–378 (KGFDADKEAS).

This sequence belongs to the LEO1 family.

It localises to the nucleus. This is an uncharacterized protein from Schizosaccharomyces pombe (strain 972 / ATCC 24843) (Fission yeast).